A 228-amino-acid polypeptide reads, in one-letter code: L-ribulose-5-phosphate 4-epimerase UlaF (228 aa).

Substrate-binding positions include 26–27 (GN), 43–44 (SG), and 72–73 (SS). Residues Asp74, His93, and His95 each coordinate Zn(2+). Residue Asp118 is the Proton donor/acceptor of the active site. His167 serves as a coordination point for Zn(2+). Tyr225 serves as the catalytic Proton donor/acceptor.

It belongs to the aldolase class II family. AraD/FucA subfamily. It depends on Zn(2+) as a cofactor.

The enzyme catalyses L-ribulose 5-phosphate = D-xylulose 5-phosphate. It functions in the pathway cofactor degradation; L-ascorbate degradation; D-xylulose 5-phosphate from L-ascorbate: step 4/4. In terms of biological role, catalyzes the isomerization of L-ribulose 5-phosphate to D-xylulose 5-phosphate. Is involved in the anaerobic L-ascorbate utilization. The chain is L-ribulose-5-phosphate 4-epimerase UlaF from Shigella boydii serotype 18 (strain CDC 3083-94 / BS512).